The chain runs to 183 residues: Putative calmodulin-like protein 2 (183 aa).

4 consecutive EF-hand domains span residues 7 to 42 (EQIA…LGQS), 43 to 78 (PTEA…KLRD), 80 to 115 (GAED…LGDP), and 116 to 151 (LSDD…KRRQ). Residues Asp20, Asp22, Asp24, Thr26, Glu31, Asp56, Asp58, Ser60, Ser62, Glu67, Asp93, Asp95, Asn97, Glu104, Asp129, Asp131, Asp133, Gln135, and Glu140 each contribute to the Ca(2+) site. Residues 154 to 183 (MEGHGSGGHRSSNSHKKSGCCGPNSSCTIL) form a disordered region. Residues Cys173 and Cys174 are each lipidated (S-palmitoyl cysteine). Cys180 bears the Cysteine methyl ester mark. Cys180 carries S-farnesyl cysteine lipidation. Positions 181-183 (TIL) are cleaved as a propeptide — removed in mature form.

It belongs to the calmodulin family.

It localises to the membrane. Potential calcium sensor. The protein is Putative calmodulin-like protein 2 (CML2) of Oryza sativa subsp. japonica (Rice).